The sequence spans 171 residues: ATP synthase subunit b (171 aa).

Residues 24–44 (INLVIVIGVLYWFLKGFLGGI) traverse the membrane as a helical segment.

Belongs to the ATPase B chain family. F-type ATPases have 2 components, F(1) - the catalytic core - and F(0) - the membrane proton channel. F(1) has five subunits: alpha(3), beta(3), gamma(1), delta(1), epsilon(1). F(0) has four main subunits: a(1), b(1), b'(1) and c(10-14). The alpha and beta chains form an alternating ring which encloses part of the gamma chain. F(1) is attached to F(0) by a central stalk formed by the gamma and epsilon chains, while a peripheral stalk is formed by the delta, b and b' chains.

Its subcellular location is the cellular thylakoid membrane. F(1)F(0) ATP synthase produces ATP from ADP in the presence of a proton or sodium gradient. F-type ATPases consist of two structural domains, F(1) containing the extramembraneous catalytic core and F(0) containing the membrane proton channel, linked together by a central stalk and a peripheral stalk. During catalysis, ATP synthesis in the catalytic domain of F(1) is coupled via a rotary mechanism of the central stalk subunits to proton translocation. Its function is as follows. Component of the F(0) channel, it forms part of the peripheral stalk, linking F(1) to F(0). The protein is ATP synthase subunit b of Synechococcus sp. (strain WH7803).